We begin with the raw amino-acid sequence, 210 residues long: N-(5'-phosphoribosyl)anthranilate isomerase (210 aa).

It belongs to the TrpF family.

It catalyses the reaction N-(5-phospho-beta-D-ribosyl)anthranilate = 1-(2-carboxyphenylamino)-1-deoxy-D-ribulose 5-phosphate. Its pathway is amino-acid biosynthesis; L-tryptophan biosynthesis; L-tryptophan from chorismate: step 3/5. This Staphylococcus aureus (strain Mu3 / ATCC 700698) protein is N-(5'-phosphoribosyl)anthranilate isomerase.